The primary structure comprises 120 residues: Chaperonin GroEL (120 aa).

An ATP-binding site is contributed by 23–27 (DGTTT).

It belongs to the chaperonin (HSP60) family. As to quaternary structure, forms a cylinder of 14 subunits composed of two heptameric rings stacked back-to-back. Interacts with the co-chaperonin GroES.

It is found in the cytoplasm. It carries out the reaction ATP + H2O + a folded polypeptide = ADP + phosphate + an unfolded polypeptide.. Functionally, together with its co-chaperonin GroES, plays an essential role in assisting protein folding. The GroEL-GroES system forms a nano-cage that allows encapsulation of the non-native substrate proteins and provides a physical environment optimized to promote and accelerate protein folding. The chain is Chaperonin GroEL from Mycobacterium kansasii.